The primary structure comprises 477 residues: Argininosuccinate lyase (477 aa).

It belongs to the lyase 1 family. Argininosuccinate lyase subfamily.

It localises to the cytoplasm. It catalyses the reaction 2-(N(omega)-L-arginino)succinate = fumarate + L-arginine. Its pathway is amino-acid biosynthesis; L-arginine biosynthesis; L-arginine from L-ornithine and carbamoyl phosphate: step 3/3. This Corynebacterium diphtheriae (strain ATCC 700971 / NCTC 13129 / Biotype gravis) protein is Argininosuccinate lyase.